Here is a 198-residue protein sequence, read N- to C-terminus: Virion membrane protein A17 precursor homolog (198 aa).

The Virion surface portion of the chain corresponds to 1–55 (MDNNYLNYYNVFEEFDAGAGIKEKELFTEEQQLSFLPKKGLGNGGFDGVERLYSN). Residues 56-76 (IINNNDIKSLLALIMLVFAIN) form a helical membrane-spanning segment. Over 77-145 (TNSLVALIFI…TSKISKGFKR (69 aa)) the chain is Intravirion. Residues 146–166 (AIDVVLLVILGFYIVKIYGID) traverse the membrane as a helical segment. Over 167–198 (RQISIPSRRYCRQMSGPSSLENLNAFQTHSNY) the chain is Virion surface. Y198 is subject to Phosphotyrosine.

It belongs to the chordopoxvirinae A17 family. Interacts (via N-terminus) with D13 scaffold; this interaction helps D13 to associate with membranes. Interacts with A14. Interacts with A27; this interaction allows A27 to be anchored in the mature virion (MV) membrane. Part of a complex composed of A17, A25, A26 and A27. Post-translationally, the 22 kDa precursor is probably cleaved by the I7 protease during virus maturation. Phosphorylated on tyrosine and threonine. Its phosphorylation state is regulated by the F10 kinase and the H1 phosphatase. Phosphorylation by F10 kinase seems to be required to form the membranes associated with IV.

The protein resides in the virion membrane. Envelope protein which participates in virus morphogenesis. Needed for an early step in viral crescent membrane formation by interacting with D13 scaffold protein. Its interaction with D13 scaffold protein leads to the formation of rigid, crescent-shaped membranes that assemble around the cytoplasmic virus factory. Membrane anchor for the protein A27. A17-A27 virus envelope protein might be involved in fusion or attachment, and can further associate to A26. The protein is Virion membrane protein A17 precursor homolog of Fowlpox virus (strain NVSL) (FPV).